The following is a 252-amino-acid chain: Type III pantothenate kinase (252 aa).

ATP is bound at residue 6 to 13 (DIGNTSTA). 104–107 (GADR) contributes to the substrate binding site. Aspartate 106 (proton acceptor) is an active-site residue. Aspartate 128 provides a ligand contact to K(+). Threonine 131 lines the ATP pocket. Residue threonine 183 participates in substrate binding.

The protein belongs to the type III pantothenate kinase family. Homodimer. Requires NH4(+) as cofactor. It depends on K(+) as a cofactor.

Its subcellular location is the cytoplasm. It carries out the reaction (R)-pantothenate + ATP = (R)-4'-phosphopantothenate + ADP + H(+). The protein operates within cofactor biosynthesis; coenzyme A biosynthesis; CoA from (R)-pantothenate: step 1/5. Functionally, catalyzes the phosphorylation of pantothenate (Pan), the first step in CoA biosynthesis. The chain is Type III pantothenate kinase from Thermus thermophilus (strain ATCC BAA-163 / DSM 7039 / HB27).